A 177-amino-acid polypeptide reads, in one-letter code: MHATTIVTVRKGNKVVIAGDGQVSLGQTIMKGNARKVRRIGKGGNVIAGFAGATADAFTLLERLEAKLEQYPDQLTRACVELAKDWRTDRYLRRLEAMMLVADKSVSLALTGTGDVLEPEHGVMAIGSGGNYALAAARALMDTDKDAEEIARKAMQIASDICVYTNNNFVVETLDAA.

Thr-4 is a catalytic residue. The Na(+) site is built by Ser-159, Cys-162, and Thr-165.

It belongs to the peptidase T1B family. HslV subfamily. As to quaternary structure, a double ring-shaped homohexamer of HslV is capped on each side by a ring-shaped HslU homohexamer. The assembly of the HslU/HslV complex is dependent on binding of ATP.

The protein resides in the cytoplasm. It carries out the reaction ATP-dependent cleavage of peptide bonds with broad specificity.. Allosterically activated by HslU binding. Protease subunit of a proteasome-like degradation complex believed to be a general protein degrading machinery. This Mesorhizobium japonicum (strain LMG 29417 / CECT 9101 / MAFF 303099) (Mesorhizobium loti (strain MAFF 303099)) protein is ATP-dependent protease subunit HslV.